We begin with the raw amino-acid sequence, 371 residues long: tRNA N6-adenosine threonylcarbamoyltransferase (371 aa).

Fe cation contacts are provided by His-110 and His-114. Substrate-binding positions include 132 to 136 (LVSGG), Asp-165, Gly-178, Asp-182, and Asn-289. Fe cation is bound at residue Asp-317.

Belongs to the KAE1 / TsaD family. It depends on Fe(2+) as a cofactor.

The protein localises to the cytoplasm. The catalysed reaction is L-threonylcarbamoyladenylate + adenosine(37) in tRNA = N(6)-L-threonylcarbamoyladenosine(37) in tRNA + AMP + H(+). Functionally, required for the formation of a threonylcarbamoyl group on adenosine at position 37 (t(6)A37) in tRNAs that read codons beginning with adenine. Is involved in the transfer of the threonylcarbamoyl moiety of threonylcarbamoyl-AMP (TC-AMP) to the N6 group of A37, together with TsaE and TsaB. TsaD likely plays a direct catalytic role in this reaction. This Solidesulfovibrio magneticus (strain ATCC 700980 / DSM 13731 / RS-1) (Desulfovibrio magneticus) protein is tRNA N6-adenosine threonylcarbamoyltransferase.